The sequence spans 340 residues: GTP 3',8-cyclase (340 aa).

Residues 8–227 form the Radical SAM core domain; the sequence is KLGRPIRDLR…TMIEQHFEID (220 aa). Arg-17 is a binding site for GTP. [4Fe-4S] cluster contacts are provided by Cys-24 and Cys-28. Tyr-30 serves as a coordination point for S-adenosyl-L-methionine. Cys-31 is a [4Fe-4S] cluster binding site. Arg-71 contacts GTP. Gly-75 contacts S-adenosyl-L-methionine. Thr-102 lines the GTP pocket. S-adenosyl-L-methionine is bound at residue Ser-126. Lys-163 lines the GTP pocket. Met-197 contacts S-adenosyl-L-methionine. [4Fe-4S] cluster is bound by residues Cys-261 and Cys-264. 266 to 268 lines the GTP pocket; that stretch reads RAR. Cys-278 contributes to the [4Fe-4S] cluster binding site.

It belongs to the radical SAM superfamily. MoaA family. Monomer and homodimer. The cofactor is [4Fe-4S] cluster.

The enzyme catalyses GTP + AH2 + S-adenosyl-L-methionine = (8S)-3',8-cyclo-7,8-dihydroguanosine 5'-triphosphate + 5'-deoxyadenosine + L-methionine + A + H(+). Its pathway is cofactor biosynthesis; molybdopterin biosynthesis. Functionally, catalyzes the cyclization of GTP to (8S)-3',8-cyclo-7,8-dihydroguanosine 5'-triphosphate. The polypeptide is GTP 3',8-cyclase (Staphylococcus aureus (strain MRSA252)).